We begin with the raw amino-acid sequence, 116 residues long: Large ribosomal subunit protein uL18 (116 aa).

It belongs to the universal ribosomal protein uL18 family. Part of the 50S ribosomal subunit; part of the 5S rRNA/L5/L18/L25 subcomplex. Contacts the 5S and 23S rRNAs.

In terms of biological role, this is one of the proteins that bind and probably mediate the attachment of the 5S RNA into the large ribosomal subunit, where it forms part of the central protuberance. The protein is Large ribosomal subunit protein uL18 of Shewanella denitrificans (strain OS217 / ATCC BAA-1090 / DSM 15013).